The following is a 414-amino-acid chain: 2,3-bisphosphoglycerate-independent phosphoglycerate mutase (414 aa).

Belongs to the BPG-independent phosphoglycerate mutase family. A-PGAM subfamily.

It carries out the reaction (2R)-2-phosphoglycerate = (2R)-3-phosphoglycerate. It functions in the pathway carbohydrate degradation; glycolysis; pyruvate from D-glyceraldehyde 3-phosphate: step 3/5. Catalyzes the interconversion of 2-phosphoglycerate and 3-phosphoglycerate. The chain is 2,3-bisphosphoglycerate-independent phosphoglycerate mutase from Saccharolobus solfataricus (strain ATCC 35092 / DSM 1617 / JCM 11322 / P2) (Sulfolobus solfataricus).